We begin with the raw amino-acid sequence, 122 residues long: Flagellar protein FliT (122 aa).

The interval 1–50 is required for homodimerization; that stretch reads MTSTVEFINRWQRIALLSQSLLELAQRGEWDLLLQQEVSYLQSIETVMEK. The segment at 60-98 is fliD binding; that stretch reads IQDMVAGYIKQTLDNEQLLKGLLQQRLDELSSLIGQSTR.

It belongs to the FliT family. Homodimer. Interacts with FliD and FlhC.

It is found in the cytoplasm. The protein resides in the cytosol. Functionally, dual-function protein that regulates the transcription of class 2 flagellar operons and that also acts as an export chaperone for the filament-capping protein FliD. As a transcriptional regulator, acts as an anti-FlhDC factor; it directly binds FlhC, thus inhibiting the binding of the FlhC/FlhD complex to class 2 promoters, resulting in decreased expression of class 2 flagellar operons. As a chaperone, effects FliD transition to the membrane by preventing its premature polymerization, and by directing it to the export apparatus. The sequence is that of Flagellar protein FliT from Salmonella gallinarum (strain 287/91 / NCTC 13346).